The sequence spans 397 residues: Putative efflux system protein YvrP (397 aa).

The chain crosses the membrane as a helical span at residues leucine 8 to phenylalanine 28. Residues glutamate 106–lysine 183 adopt a coiled-coil conformation.

It belongs to the membrane fusion protein (MFP) (TC 8.A.1) family.

The protein localises to the cell membrane. The polypeptide is Putative efflux system protein YvrP (yvrP) (Bacillus subtilis (strain 168)).